The primary structure comprises 290 residues: UPF0761 membrane protein YihY (290 aa).

The next 6 helical transmembrane spans lie at 44-64 (LLSLVPLVAVVFALFAAFPMF), 104-124 (VGACGLIVTALLLMYSIDSAL), 140-160 (FAVYWMILTLGPLLAGASLAI), 183-203 (IFPLLLSWISFWLLYSIVPTI), 210-230 (AIVGAFVAALLFEAGKKGFAL), and 244-264 (VLAVIPILFVWVYWTWCIVLL).

It belongs to the UPF0761 family.

Its subcellular location is the cell inner membrane. This chain is UPF0761 membrane protein YihY, found in Escherichia coli O139:H28 (strain E24377A / ETEC).